The following is a 601-amino-acid chain: UvrABC system protein C (601 aa).

Residues 17-95 (TLPGVYRMLD…IKALAPRYNI (79 aa)) form the GIY-YIG domain. Positions 204–239 (SELINELTRRMTAAAEAMAFEQAAELRDQIQALARV) constitute a UVR domain.

This sequence belongs to the UvrC family. In terms of assembly, interacts with UvrB in an incision complex.

It is found in the cytoplasm. In terms of biological role, the UvrABC repair system catalyzes the recognition and processing of DNA lesions. UvrC both incises the 5' and 3' sides of the lesion. The N-terminal half is responsible for the 3' incision and the C-terminal half is responsible for the 5' incision. The polypeptide is UvrABC system protein C (Chromobacterium violaceum (strain ATCC 12472 / DSM 30191 / JCM 1249 / CCUG 213 / NBRC 12614 / NCIMB 9131 / NCTC 9757 / MK)).